The chain runs to 344 residues: AA9 family lytic polysaccharide monooxygenase J (344 aa).

An N-terminal signal peptide occupies residues 1–20 (MKSSLLVVLTAGLAVRDAIA). Residues histidine 21 and histidine 99 each contribute to the Cu(2+) site. The cysteines at positions 58 and 194 are disulfide-linked. 2 residues coordinate O2: histidine 180 and glutamine 189. Tyrosine 191 serves as a coordination point for Cu(2+). A disordered region spans residues 272 to 301 (PGGKPASGGSDGNAPEVAEPSGGEGSPSAP). The segment covering 285–301 (APEVAEPSGGEGSPSAP) has biased composition (low complexity). The 38-residue stretch at 304-341 (CEVAAYGQCGGDQYSGCTQCASGYTCKAVSPPYYSQCA) folds into the CBM1 domain.

Belongs to the polysaccharide monooxygenase AA9 family. It depends on Cu(2+) as a cofactor.

It localises to the secreted. It carries out the reaction [(1-&gt;4)-beta-D-glucosyl]n+m + reduced acceptor + O2 = 4-dehydro-beta-D-glucosyl-[(1-&gt;4)-beta-D-glucosyl]n-1 + [(1-&gt;4)-beta-D-glucosyl]m + acceptor + H2O.. Functionally, lytic polysaccharide monooxygenase (LPMO) that depolymerizes crystalline and amorphous polysaccharides via the oxidation of scissile alpha- or beta-(1-4)-glycosidic bonds, yielding C4 oxidation products. Catalysis by LPMOs requires the reduction of the active-site copper from Cu(II) to Cu(I) by a reducing agent and H(2)O(2) or O(2) as a cosubstrate. The polypeptide is AA9 family lytic polysaccharide monooxygenase J (gh61-10) (Neurospora crassa (strain ATCC 24698 / 74-OR23-1A / CBS 708.71 / DSM 1257 / FGSC 987)).